The primary structure comprises 134 residues: Arsenate reductase (134 aa).

Residues Cys-11, Cys-83, and Cys-90 each act as nucleophile in the active site. Disulfide bonds link Cys-11–Cys-83 and Cys-83–Cys-90.

The protein belongs to the low molecular weight phosphotyrosine protein phosphatase family. Thioredoxin-coupled ArsC subfamily.

Its subcellular location is the cytoplasm. The enzyme catalyses arsenate + [thioredoxin]-dithiol + H(+) = arsenite + [thioredoxin]-disulfide + H2O. In terms of biological role, catalyzes the reduction of arsenate [As(V)] to arsenite [As(III)]. The protein is Arsenate reductase of Bacillus cereus (strain G9842).